Here is an 827-residue protein sequence, read N- to C-terminus: Protein SEY1 (827 aa).

The interval 1–26 (MSQSSPSNAETDEDLSTTSSSSSFVP) is disordered. The Cytoplasmic portion of the chain corresponds to 1–719 (MSQSSPSNAE…KRSIVQHVTQ (719 aa)). One can recognise a GB1/RHD3-type G domain in the interval 63–291 (GNNYHIISVF…VKKDLFRPNY (229 aa)). Residue 73–80 (GSQSTGKS) participates in GTP binding. Coiled-coil stretches lie at residues 389–409 (KSVY…KFRE) and 472–492 (VSNL…VELK). The chain crosses the membrane as a helical span at residues 720–740 (IPYYIYLVIMVLGWNEFMAIV). The Lumenal segment spans residues 741–743 (RNP). The chain crosses the membrane as a helical span at residues 744–764 (LFFSLVLVFGAGLYILYSMNL). Topologically, residues 765–827 (LKPAMVVVQR…VVETIEMQDL (63 aa)) are cytoplasmic. A coiled-coil region spans residues 803 to 823 (QKISASNREKVEEEKVVETIE).

This sequence belongs to the TRAFAC class dynamin-like GTPase superfamily. GB1/RHD3 GTPase family. RHD3 subfamily.

The protein localises to the endoplasmic reticulum membrane. In terms of biological role, cooperates with the reticulon proteins and tubule-shaping DP1 family proteins to generate and maintain the structure of the tubular endoplasmic reticulum network. Has GTPase activity, which is required for its function in ER organization. The protein is Protein SEY1 of Scheffersomyces stipitis (strain ATCC 58785 / CBS 6054 / NBRC 10063 / NRRL Y-11545) (Yeast).